The chain runs to 55 residues: Large ribosomal subunit protein bL33 (55 aa).

This sequence belongs to the bacterial ribosomal protein bL33 family.

The polypeptide is Large ribosomal subunit protein bL33 (Methylobacterium nodulans (strain LMG 21967 / CNCM I-2342 / ORS 2060)).